A 372-amino-acid chain; its full sequence is tRNA-specific 2-thiouridylase MnmA (372 aa).

ATP contacts are provided by residues 6-13 (AMSGGVDS) and L32. Residue C101 is the Nucleophile of the active site. A disulfide bond links C101 and C193. ATP is bound at residue G125. The segment at 143 to 145 (KDQ) is interaction with tRNA. The active-site Cysteine persulfide intermediate is the C193.

Belongs to the MnmA/TRMU family.

The protein localises to the cytoplasm. It carries out the reaction S-sulfanyl-L-cysteinyl-[protein] + uridine(34) in tRNA + AH2 + ATP = 2-thiouridine(34) in tRNA + L-cysteinyl-[protein] + A + AMP + diphosphate + H(+). Its function is as follows. Catalyzes the 2-thiolation of uridine at the wobble position (U34) of tRNA, leading to the formation of s(2)U34. This chain is tRNA-specific 2-thiouridylase MnmA, found in Corynebacterium kroppenstedtii (strain DSM 44385 / JCM 11950 / CIP 105744 / CCUG 35717).